A 26-amino-acid polypeptide reads, in one-letter code: Muscarinic toxin-like protein 1 (26 aa).

Belongs to the three-finger toxin family. Short-chain subfamily. Orphan group VIII (haditoxin) sub-subfamily. Homodimer; non-covalently linked. As to expression, expressed by the venom gland.

Its subcellular location is the secreted. Antagonist of muscle and neuronal nicotinic acetylcholine receptors (nAChR) with highest affinity for neuronal alpha-7/CHRNA7 nAChRs. In Naja naja (Indian cobra), this protein is Muscarinic toxin-like protein 1.